The sequence spans 413 residues: MTDNRVENSSGRAARKLRLALMGPAFIAAIGYIDPGNFATNIQAGASFGYQLLWVVVWANLMAMLIQILSAKLGIATGKNLAEQIRDHYPRPVVWFYWVQAEIIAMATDLAEFIGAAIGFKLILGVSLLQGAVLTGIATFLILMLQRRGQKPLEKVIGGLLLFVAAAYIVELFFSQPDMAQLGKGMVIPALPNPEAVFLAAGVLGATIMPHVIYLHSSLTQHLHGGTRQQRYSATKWDVAIAMTIAGFVNLAMMATAAAAFHFSGHTGIADLDQAYLTLEPLLSHAAATVFGLSLVAAGLSSTVVGTLAGQVVMQGFVRFHIPLWVRRTITMLPSFIVILMGLDPTRILVMSQVLLSFGIALALVPLLIFTSNATLMGELVNTRRVKQIGWIIVVLVVALNIWLLVGTVMGLS.

The Cytoplasmic portion of the chain corresponds to 1–19 (MTDNRVENSSGRAARKLRL). Residues 20–39 (ALMGPAFIAAIGYIDPGNFA) form a helical membrane-spanning segment. At 40–51 (TNIQAGASFGYQ) the chain is on the periplasmic side. Residues 52–71 (LLWVVVWANLMAMLIQILSA) traverse the membrane as a helical segment. The Cytoplasmic segment spans residues 72 to 95 (KLGIATGKNLAEQIRDHYPRPVVW). Residues 96 to 118 (FYWVQAEIIAMATDLAEFIGAAI) form a helical membrane-spanning segment. Over 119-125 (GFKLILG) the chain is Periplasmic. The helical transmembrane segment at 126 to 145 (VSLLQGAVLTGIATFLILML) threads the bilayer. Over 146–155 (QRRGQKPLEK) the chain is Cytoplasmic. A helical membrane pass occupies residues 156 to 175 (VIGGLLLFVAAAYIVELFFS). Over 176 to 196 (QPDMAQLGKGMVIPALPNPEA) the chain is Periplasmic. A helical membrane pass occupies residues 197–220 (VFLAAGVLGATIMPHVIYLHSSLT). Over 221–238 (QHLHGGTRQQRYSATKWD) the chain is Cytoplasmic. Residues 239 to 258 (VAIAMTIAGFVNLAMMATAA) traverse the membrane as a helical segment. At 259–276 (AAFHFSGHTGIADLDQAY) the chain is on the periplasmic side. A helical transmembrane segment spans residues 277–297 (LTLEPLLSHAAATVFGLSLVA). Residues 298 to 327 (AGLSSTVVGTLAGQVVMQGFVRFHIPLWVR) lie on the Cytoplasmic side of the membrane. Residues 328–344 (RTITMLPSFIVILMGLD) form a helical membrane-spanning segment. Over 345–350 (PTRILV) the chain is Periplasmic. The chain crosses the membrane as a helical span at residues 351–370 (MSQVLLSFGIALALVPLLIF). The Cytoplasmic portion of the chain corresponds to 371 to 387 (TSNATLMGELVNTRRVK). Residues 388-406 (QIGWIIVVLVVALNIWLLV) traverse the membrane as a helical segment. At 407 to 413 (GTVMGLS) the chain is on the periplasmic side.

This sequence belongs to the NRAMP family.

The protein resides in the cell inner membrane. Functionally, h(+)-stimulated, divalent metal cation uptake system. The protein is Divalent metal cation transporter MntH of Salmonella schwarzengrund (strain CVM19633).